A 226-amino-acid chain; its full sequence is Ribose-5-phosphate isomerase A (226 aa).

Residues T28–T31, D84–D87, and K97–G100 contribute to the substrate site. Residue E106 is the Proton acceptor of the active site. K124 contacts substrate.

It belongs to the ribose 5-phosphate isomerase family. In terms of assembly, homodimer.

It catalyses the reaction aldehydo-D-ribose 5-phosphate = D-ribulose 5-phosphate. The protein operates within carbohydrate degradation; pentose phosphate pathway; D-ribose 5-phosphate from D-ribulose 5-phosphate (non-oxidative stage): step 1/1. Its function is as follows. Catalyzes the reversible conversion of ribose-5-phosphate to ribulose 5-phosphate. The sequence is that of Ribose-5-phosphate isomerase A from Deinococcus radiodurans (strain ATCC 13939 / DSM 20539 / JCM 16871 / CCUG 27074 / LMG 4051 / NBRC 15346 / NCIMB 9279 / VKM B-1422 / R1).